Here is a 405-residue protein sequence, read N- to C-terminus: Eukaryotic translation initiation factor 5 (405 aa).

Glycine 27–threonine 34 contributes to the GTP binding site. The interval asparagine 143–leucine 202 is disordered. A phosphoserine mark is found at serine 170 and serine 172. Polar residues predominate over residues glycine 177–proline 192. A Phosphothreonine modification is found at threonine 191. A Phosphoserine modification is found at serine 228. Residues valine 241–glutamate 402 form the W2 domain. At threonine 317 the chain carries Phosphothreonine. Serine 397 is modified (phosphoserine).

It belongs to the eIF-2-beta/eIF-5 family. In terms of assembly, monomer. The factors eIF-1, eIF-2, eIF-3, TIF5/eIF-5 and methionyl-tRNAi form a multifactor complex (MFC) that may bind to the 40S ribosome. TIF32, NIP1 and TIF5/eIF-5 comprise a minimal 40S-ribosome-binding unit. Interacts with NIP1. Interacts with SUI3.

Catalyzes the hydrolysis of GTP bound to the 40S ribosomal initiation complex (40S.mRNA.Met-tRNA[F].eIF-2.GTP) with the subsequent joining of a 60S ribosomal subunit resulting in the release of eIF-2 and the guanine nucleotide. The subsequent joining of a 60S ribosomal subunit results in the formation of a functional 80S initiation complex (80S.mRNA.Met-tRNA[F]). eIF-5 is essential for cell viability. In Saccharomyces cerevisiae (strain ATCC 204508 / S288c) (Baker's yeast), this protein is Eukaryotic translation initiation factor 5 (TIF5).